A 329-amino-acid chain; its full sequence is 4-methyl-2-oxopentanoate reductase A (329 aa).

NAD(+) is bound by residues 162 to 163, 240 to 242, and aspartate 266; these read GI and TAR. The active site involves arginine 242. Glutamate 271 is a catalytic residue. Histidine 289 serves as the catalytic Proton donor.

This sequence belongs to the D-isomer specific 2-hydroxyacid dehydrogenase family.

The catalysed reaction is (2R)-hydroxy-4-methylpentanoate + NADP(+) = 4-methyl-2-oxopentanoate + NADPH + H(+). It catalyses the reaction a (2R)-2-hydroxycarboxylate + NADP(+) = a 2-oxocarboxylate + NADPH + H(+). Its function is as follows. 4-methyl-2-oxopentanoate (MOA) reductase that reduces MOA, a possible intermediate in leucine synthesis, to D-leucate in a NADPH- or NADH-dependent manner, but with a preference for NADPH. In addition to MOA, shows broad substrate specificity toward 2-keto acids. The chain is 4-methyl-2-oxopentanoate reductase A from Aspergillus oryzae (strain ATCC 42149 / RIB 40) (Yellow koji mold).